Here is a 516-residue protein sequence, read N- to C-terminus: 7-chloro-L-tryptophan 6-halogenase KtzR (516 aa).

5 residues coordinate FAD: Gly-6, Thr-8, Ala-9, Glu-42, and Ala-43. The active site involves Lys-71. Val-195 contacts FAD. Positions 357 and 358 each coordinate chloride. Position 359 (Ile-359) interacts with FAD.

It belongs to the flavin-dependent halogenase family. Bacterial tryptophan halogenase subfamily.

The catalysed reaction is 7-chloro-L-tryptophan + FADH2 + chloride + O2 = 6,7-dichloro-L-tryptophan + FAD + 2 H2O. In terms of biological role, involved in the biosynthesis of kutznerides, actinomycete-derived antifungal and antimicrobial cyclic hexadepsipeptides. Together with KtzQ, catalyzes the regiospecific dichlorination of L-tryptophan (L-Trp) to produce 6,7-dichloro-L-tryptophan. KtzR catalyzes the chlorination of 7-chloro-L-tryptophan at C6 position to yield 6,7-dichloro-L-tryptophan. Can also use L-Trp as substrate and form 6-chloro-L-tryptophan, but has a 120-fold preference for 7-chloro-L-tryptophan over L-Trp. Cannot use piperazic acid or gamma,delta-dehydropiperazic acid. This chain is 7-chloro-L-tryptophan 6-halogenase KtzR, found in Kutzneria sp. (strain 744).